Here is a 237-residue protein sequence, read N- to C-terminus: N-alpha-acetyltransferase 40 (237 aa).

Glycine 2 is lipidated: N-myristoyl glycine. The N-acetyltransferase domain occupies 63 to 216; that stretch reads TALSPDTVEW…EDCSYEILSR (154 aa). Substrate-binding positions include tyrosine 85, 127–129, and tyrosine 138; that span reads DVE. Residues 140–142 and 148–153 each bind acetyl-CoA; these read VQL and RKGLGK. A substrate-binding site is contributed by threonine 174. Asparagine 179 is a binding site for acetyl-CoA. Residue tyrosine 211 participates in substrate binding.

Belongs to the acetyltransferase family. NAA40 subfamily.

It localises to the cytoplasm. The protein resides in the nucleus. The catalysed reaction is N-terminal L-seryl-[histone H4] + acetyl-CoA = N-terminal N(alpha)-acetyl-L-seryl-[histone H4] + CoA + H(+). It catalyses the reaction N-terminal L-seryl-[histone H2A] + acetyl-CoA = N-terminal N(alpha)-acetyl-L-seryl-[histone H2A] + CoA + H(+). In terms of biological role, N-alpha-acetyltransferase that specifically mediates the acetylation of the N-terminal residues of histones H4 and H2A. In contrast to other N-alpha-acetyltransferase, has a very specific selectivity for histones H4 and H2A N-terminus and specifically recognizes the 'Ser-Gly-Arg-Gly sequence'. The chain is N-alpha-acetyltransferase 40 (naa40) from Danio rerio (Zebrafish).